The sequence spans 1947 residues: Sodium channel protein type 3 subunit alpha (1947 aa).

Residues 1–128 (MAQALLVPPG…KIAIKILVHS (128 aa)) lie on the Cytoplasmic side of the membrane. The tract at residues 28–60 (RAAEEKAKKPKKEQDIDDENKPKPNSDLEAGKN) is disordered. Residues 46-57 (ENKPKPNSDLEA) are compositionally biased toward basic and acidic residues. The I repeat unit spans residues 110–455 (ILTPLNPVRK…QQMLEQLKKQ (346 aa)). A helical membrane pass occupies residues 129–146 (LFSMLIMCTILTNCVFMT). The Extracellular portion of the chain corresponds to 147 to 152 (LSNPPD). A helical transmembrane segment spans residues 153-174 (WTKNVEYTFTGIYTFESLIKIL). At 175–188 (ARGFCLEDFTFLRD) the chain is on the cytoplasmic side. A helical membrane pass occupies residues 189 to 206 (PWNWLDFSVIVMAYVTEF). Over 207–213 (VDLGNVS) the chain is Extracellular. Residue asparagine 211 is glycosylated (N-linked (GlcNAc...) asparagine). A helical membrane pass occupies residues 214–235 (ALRTFRVLRALKTISVIPGLKT). At 236 to 249 (IVGALIQSVKKLSD) the chain is on the cytoplasmic side. The helical transmembrane segment at 250–269 (VMILTVFCLSVFALIGLQLF) threads the bilayer. At 270–369 (MGNLRNKCLQ…NYGYTSFDTF (100 aa)) the chain is on the extracellular side. 5 N-linked (GlcNAc...) asparagine glycosylation sites follow: asparagine 290, asparagine 296, asparagine 302, asparagine 307, and asparagine 339. Positions 370 to 386 (SWAFLSLFRLMTQDYWE) form an intramembrane region, pore-forming. Topologically, residues 387 to 397 (NLYQLTLRAAG) are extracellular. A helical transmembrane segment spans residues 398-424 (KTYMIFFVLVIFLGSFYLVNLILAVVA). The Cytoplasmic segment spans residues 425 to 712 (MAYEEQNQAT…LVNLIVMDPF (288 aa)). Phosphoserine occurs at positions 484, 485, and 486. 2 disordered regions span residues 493–529 (SKSA…SESE) and 587–632 (VGSE…ETEV). The span at 500–509 (RNRRKKRRQR) shows a compositional bias: basic residues. Composition is skewed to basic and acidic residues over residues 510–529 (EHLE…SESE) and 596–622 (DEHS…ERRN). The II repeat unit spans residues 693-965 (CCDSWLKVKH…QIAVGRMQKG (273 aa)). The chain crosses the membrane as a helical span at residues 713–730 (VDLAITICIVLNTLFMAM). Residues 731–738 (EHYPMTEQ) lie on the Extracellular side of the membrane. A helical membrane pass occupies residues 739–763 (FSSVLTVGNLVFTGIFTAEMVLKII). The Cytoplasmic portion of the chain corresponds to 764-773 (AMDPYYYFQE). A helical membrane pass occupies residues 774–793 (GWNIFDGIIVSLSLMELGLA). Residues 794–797 (NVEG) lie on the Extracellular side of the membrane. A helical transmembrane segment spans residues 798-816 (LSVLRSFRLLRVFKLAKSW). Residues 817–834 (PTLNMLIKIIGNSVGALG) lie on the Cytoplasmic side of the membrane. The helical transmembrane segment at 835–855 (NLTLVLAIIVFIFAVVGMQLF) threads the bilayer. Residues 856–880 (GKSYKECVCKINEDCKLPRWHMNDF) lie on the Extracellular side of the membrane. Residues cysteine 864 and cysteine 870 are joined by a disulfide bond. Positions 881–896 (FHSFLIVFRVLCGEWI) form an intramembrane region, pore-forming. The Extracellular portion of the chain corresponds to 897–907 (ETMWDCMEVAG). A disulfide bond links cysteine 902 and cysteine 911. The chain crosses the membrane as a helical span at residues 908–934 (QTMCLIVFMLVMVIGNLVVLNLFLALL). The Cytoplasmic portion of the chain corresponds to 935 to 1157 (LSSFSSDNLA…RKTCYSIVEH (223 aa)). A disordered region spans residues 1070–1113 (EEFSSESELEESKEKLNATSSSEGSTVDVAPPREGEQAEIEPEE). The III repeat unit spans residues 1140 to 1451 (KGKIWWNLRK…KKYYNAMKKL (312 aa)). The chain crosses the membrane as a helical span at residues 1158-1178 (NWFETFIVFMILLSSGALAFE). The Extracellular segment spans residues 1179-1190 (DIYIEQRKTIKT). A helical membrane pass occupies residues 1191–1212 (MLEYADKVFTYIFILEMLLKWV). Over 1213–1218 (AYGFQT) the chain is Cytoplasmic. The helical transmembrane segment at 1219 to 1244 (YFTNAWCWLDFLIVDVSLVSLVANAL) threads the bilayer. Residues 1245-1253 (GYSELGAIK) are Extracellular-facing. The chain crosses the membrane as a helical span at residues 1254 to 1272 (SLRTLRALRPLRALSRFEG). At 1273–1285 (MRVVVNALVGAIP) the chain is on the cytoplasmic side. Residues 1286–1308 (SIMNVLLVCLIFWLIFSIMGVNL) form a helical membrane-spanning segment. Residues 1309–1354 (FAGKFYHCVNMTTGSMFDMSEVNNFSDCQALGKQARWKNVKVNFDN) are Extracellular-facing. A disulfide bond links cysteine 1316 and cysteine 1336. N-linked (GlcNAc...) asparagine glycans are attached at residues asparagine 1318 and asparagine 1332. The pore-forming intramembrane region spans 1355–1371 (VGAGYLALLQVATFKGW). Residues 1372-1394 (MDIMYAAVDSRDVKLQPVYEENL) lie on the Extracellular side of the membrane. Residues 1395–1420 (YMYLYFVIFIIFGSFFTLNLFIGVII) traverse the membrane as a helical segment. Residues 1421–1478 (DNFNQQKKKFGGQDIFMTEEQKKYYNAMKKLGSKKPQKPIPRPANKFQGMVFDFVTRQ) lie on the Cytoplasmic side of the membrane. Residue serine 1453 is modified to Phosphoserine. The IV repeat unit spans residues 1460–1758 (IPRPANKFQG…WEKFDPDATQ (299 aa)). The chain crosses the membrane as a helical span at residues 1479–1497 (VFDISIMILICLNMVTMMV). The Extracellular portion of the chain corresponds to 1498 to 1505 (ETDDQSKY). Residues 1506 to 1529 (MTLVLSRINLVFIVLFTGEFLLKL) traverse the membrane as a helical segment. Residues 1530 to 1539 (ISLRYYYFTI) lie on the Cytoplasmic side of the membrane. Residues 1540-1557 (GWNIFDFVVVILSIVGMF) traverse the membrane as a helical segment. Topologically, residues 1558–1569 (LAELIEKYFVSP) are extracellular. Residues 1570–1592 (TLFRVIRLARIGRILRLIKGAKG) form a helical membrane-spanning segment. The Cytoplasmic segment spans residues 1593–1605 (IRTLLFALMMSLP). A helical membrane pass occupies residues 1606 to 1629 (ALFNIGLLLFLVMFIYAIFGMSNF). Residues 1630–1651 (AYVKKEAGIDDMFNFETFGNSM) are Extracellular-facing. An intramembrane region (pore-forming) is located at residues 1652–1664 (ICLFQITTSAGWD). Residues 1665-1696 (GLLAPILNSAPPDCDPDAIHPGSSVKGDCGNP) lie on the Extracellular side of the membrane. A helical membrane pass occupies residues 1697–1722 (SVGIFFFVSYIIISFLVVVNMYIAVI). Residues 1723 to 1947 (LENFSVATEE…PEKESKGKEV (225 aa)) lie on the Cytoplasmic side of the membrane. The IQ domain maps to 1852–1881 (EEVSAAIIQRNYRCYLLKQRLKNISNTYDK). A disordered region spans residues 1901–1947 (LNGNSTPEKTDGSSSTTSPPSYDSVTKPDKEKFEKDKPEKESKGKEV). Residues 1926–1947 (TKPDKEKFEKDKPEKESKGKEV) are compositionally biased toward basic and acidic residues.

This sequence belongs to the sodium channel (TC 1.A.1.10) family. Nav1.3/SCN3A subfamily. As to quaternary structure, heterooligomer of an alpha subunit, SCN3A, and 1 to 3 regulatory beta subunits including SCN1B and SCN2B; disulfide-linked with some beta subunits like SCN2B. Interacts with NEDD4L; could regulate expression of SCN3A at the plasma membrane through ubiquitination-regulated endocytosis. In terms of processing, may be ubiquitinated by NEDD4L; which would promote its endocytosis. Phosphorylation at Ser-1453 in a highly conserved cytoplasmic loop slows inactivation of the channel and reduces peak sodium currents. In terms of tissue distribution, expressed in enterochromaffin cells in both colon and small bowel (at protein level). Expressed in pancreatic alpha and beta cells.

The protein resides in the cell membrane. It is found in the basal cell membrane. The enzyme catalyses Na(+)(in) = Na(+)(out). Its function is as follows. Pore-forming subunit of Nav1.3, a voltage-gated sodium (Nav) channel that directly mediates the depolarizing phase of action potentials in excitable membranes. Navs, also called VGSCs (voltage-gated sodium channels) or VDSCs (voltage-dependent sodium channels), operate by switching between closed and open conformations depending on the voltage difference across the membrane. In the open conformation they allow Na(+) ions to selectively pass through the pore, along their electrochemical gradient. The influx of Na+ ions provokes membrane depolarization, initiating the propagation of electrical signals throughout cells and tissues. In some secretory cell types, it also participates in cell excitability through membrane depolarization and regulates cells responsiveness to stimuli triggering secretion. For instance, it controls the release of serotonin/5-hydroxytryptamine by enterochromaffin cells and is required for both glucagon- and glucose-induced insulin secretion in pancreatic endocrine cells. The polypeptide is Sodium channel protein type 3 subunit alpha (Mus musculus (Mouse)).